The chain runs to 261 residues: Enolase-phosphatase E1 (261 aa).

The Mg(2+) site is built by Asp-16 and Glu-18. Substrate is bound by residues 150–151 (SS) and Lys-184. Asp-209 contributes to the Mg(2+) binding site.

This sequence belongs to the HAD-like hydrolase superfamily. MasA/MtnC family. Monomer. Mg(2+) is required as a cofactor.

Its subcellular location is the cytoplasm. It localises to the nucleus. It carries out the reaction 5-methylsulfanyl-2,3-dioxopentyl phosphate + H2O = 1,2-dihydroxy-5-(methylsulfanyl)pent-1-en-3-one + phosphate. It functions in the pathway amino-acid biosynthesis; L-methionine biosynthesis via salvage pathway; L-methionine from S-methyl-5-thio-alpha-D-ribose 1-phosphate: step 3/6. The protein operates within amino-acid biosynthesis; L-methionine biosynthesis via salvage pathway; L-methionine from S-methyl-5-thio-alpha-D-ribose 1-phosphate: step 4/6. Functionally, bifunctional enzyme that catalyzes the enolization of 2,3-diketo-5-methylthiopentyl-1-phosphate (DK-MTP-1-P) into the intermediate 2-hydroxy-3-keto-5-methylthiopentenyl-1-phosphate (HK-MTPenyl-1-P), which is then dephosphorylated to form the acireductone 1,2-dihydroxy-3-keto-5-methylthiopentene (DHK-MTPene). The sequence is that of Enolase-phosphatase E1 (Enoph1) from Rattus norvegicus (Rat).